The primary structure comprises 250 residues: Isoprenyl transferase (250 aa).

Residue D27 is part of the active site. D27 provides a ligand contact to Mg(2+). Substrate-binding positions include 28 to 31, W32, H48, and 76 to 78; these read GNRR and STE. Residue N79 is the Proton acceptor of the active site. Residues F80, R82, R199, and 205-207 each bind substrate; that span reads RVS. E218 is a Mg(2+) binding site.

The protein belongs to the UPP synthase family. In terms of assembly, homodimer. Requires Mg(2+) as cofactor.

Catalyzes the condensation of isopentenyl diphosphate (IPP) with allylic pyrophosphates generating different type of terpenoids. The chain is Isoprenyl transferase from Chlamydia caviae (strain ATCC VR-813 / DSM 19441 / 03DC25 / GPIC) (Chlamydophila caviae).